The sequence spans 418 residues: Inward rectifier potassium channel 16 (418 aa).

Topologically, residues 1–67 are cytoplasmic; sequence MSYYGSSYHI…VVDIFTTLVD (67 aa). The chain crosses the membrane as a helical span at residues 68–94; the sequence is TKWRHMFVIFSLSYILSWLIFGSVFWL. Residues 95–117 are Extracellular-facing; that stretch reads IAFHHGDLLNDPDITPCVDNVHS. An intramembrane region (helical; Pore-forming) is located at residues 118-134; the sequence is FTGAFLFSLETQTTIGY. Residues 131–136 carry the Selectivity filter motif; the sequence is TIGYGY. At 135-143 the chain is on the extracellular side; it reads GYRCVTEEC. A helical membrane pass occupies residues 144–171; sequence SVAVLMVILQSILSCIINTFIIGAALAK. Residues 172 to 418 lie on the Cytoplasmic side of the membrane; the sequence is MATARKRAQT…LNRISVESQM (247 aa). 2 positions are modified to phosphoserine: S373 and S375.

It belongs to the inward rectifier-type potassium channel (TC 1.A.2.1) family. KCNJ16 subfamily. As to quaternary structure, it forms heteromeric channels with Kir4.1/KCNJ10; this interaction is required for KCNJ16 localization to the basolateral membrane in kidney cells. As a heteromer with KCNJ10, may interact with MAGI1; this interaction may facilitate KCNJ10/KCNJ16 potassium channel expression at the basolateral membrane in kidney cells. May form heteromers with Kir2.1/KCNJ2. Can form heteromeric channels with Kir4.2/KCNJ15. In terms of tissue distribution, widely expressed, with highest levels in adult and fetal kidney (at protein level). In the kidney, expressed in the proximal and distal convoluted tubules, but not in glomeruli nor collecting ducts.

It localises to the membrane. It is found in the basolateral cell membrane. The catalysed reaction is K(+)(in) = K(+)(out). With respect to regulation, channel activity is strongly regulated by variations of cytosolic pH; channels are activated by alkaline and inhibited by acidic pH values. Activated by phosphatidylinositol 4,5 biphosphate (PtdIns(4,5)P2). Functionally, inward rectifier potassium channels are characterized by a greater tendency to allow potassium to flow into the cell rather than out of it. Their voltage dependence is regulated by the concentration of extracellular potassium; as external potassium is raised, the voltage range of the channel opening shifts to more positive voltages. The inward rectification is mainly due to the blockage of outward current by internal magnesium. KCNJ16 may be involved in the regulation of fluid and pH balance. In the kidney, together with KCNJ10, mediates basolateral K(+) recycling in distal tubules; this process is critical for Na(+) reabsorption at the tubules. The polypeptide is Inward rectifier potassium channel 16 (KCNJ16) (Homo sapiens (Human)).